A 393-amino-acid polypeptide reads, in one-letter code: Heparan sulfate glucosamine 3-O-sulfotransferase 3A1 (393 aa).

At 1-24 (MAPSGPTGAQPSPAEPLSRSIFRK) the chain is on the cytoplasmic side. Residues 25 to 43 (FLLMLCSLLTSLYVFYCLA) form a helical; Signal-anchor for type II membrane protein membrane-spanning segment. Topologically, residues 44 to 393 (ERCPPGSGPV…MTGRDFGWDG (350 aa)) are lumenal. A disordered region spans residues 85-121 (QRRRRGRSGPGDSSDQEEQSPGLAAAPGGSGAGSSVA). 149–153 (KGGTR) is a binding site for 3'-phosphoadenylyl sulfate. Residues 171–177 (EPHFFDR) and 202–205 (KTPS) contribute to the substrate site. Positions 230 and 238 each coordinate 3'-phosphoadenylyl sulfate. Residue Asn260 is glycosylated (N-linked (GlcNAc...) asparagine). 270-271 (WS) contributes to the substrate binding site. Asn331 carries an N-linked (GlcNAc...) asparagine glycan. Cys338 and Cys350 are joined by a disulfide. 355-359 (KGRAH) is a 3'-phosphoadenylyl sulfate binding site.

It belongs to the sulfotransferase 1 family.

It is found in the golgi apparatus membrane. It carries out the reaction alpha-D-glucosaminyl-[heparan sulfate](n) + 3'-phosphoadenylyl sulfate = 3-sulfo-alpha-D-glucosaminyl-[heparan sulfate](n) + adenosine 3',5'-bisphosphate + H(+). Sulfotransferase that utilizes 3'-phospho-5'-adenylyl sulfate (PAPS) to catalyze the transfer of a sulfo group to an N-unsubstituted glucosamine linked to a 2-O-sulfo iduronic acid unit on heparan sulfate. Catalyzes the O-sulfation of glucosamine in IdoUA2S-GlcNS and also in IdoUA2S-GlcNH2. Unlike HS3ST1/3-OST-1, does not convert non-anticoagulant heparan sulfate to anticoagulant heparan sulfate. In Mus musculus (Mouse), this protein is Heparan sulfate glucosamine 3-O-sulfotransferase 3A1 (Hs3st3a1).